Reading from the N-terminus, the 533-residue chain is Putative sel1-like repeat-containing protein L21 (533 aa).

5 Sel1-like repeats span residues Val-105–Leu-140, Ser-141–Tyr-172, Tyr-173–Cys-206, Asn-207–Asn-242, and Tyr-243–His-278.

This chain is Putative sel1-like repeat-containing protein L21, found in Acanthamoeba polyphaga mimivirus (APMV).